Consider the following 440-residue polypeptide: Chromosomal replication initiator protein DnaA (440 aa).

Positions 1–69 are domain I, interacts with DnaA modulators; sequence MKERILQEIK…VKVVLGNDAT (69 aa). Residues 69–96 are domain II; it reads TFEITYEAFEPHSSYSEPLVKKRAVLLT. Positions 97 to 313 are domain III, AAA+ region; the sequence is PLNPDYTFEN…GAIIKLLVYK (217 aa). 4 residues coordinate ATP: glycine 140, glycine 142, lysine 143, and threonine 144. A domain IV, binds dsDNA region spans residues 314–440; sequence ETTGKEVDLK…GEISRRALSG (127 aa).

The protein belongs to the DnaA family. As to quaternary structure, oligomerizes as a right-handed, spiral filament on DNA at oriC.

The protein localises to the cytoplasm. In terms of biological role, plays an essential role in the initiation and regulation of chromosomal replication. ATP-DnaA binds to the origin of replication (oriC) to initiate formation of the DNA replication initiation complex once per cell cycle. Binds the DnaA box (a 9 base pair repeat at the origin) and separates the double-stranded (ds)DNA. Forms a right-handed helical filament on oriC DNA; dsDNA binds to the exterior of the filament while single-stranded (ss)DNA is stabiized in the filament's interior. The ATP-DnaA-oriC complex binds and stabilizes one strand of the AT-rich DNA unwinding element (DUE), permitting loading of DNA polymerase. After initiation quickly degrades to an ADP-DnaA complex that is not apt for DNA replication. Binds acidic phospholipids. In Thermotoga sp. (strain RQ2), this protein is Chromosomal replication initiator protein DnaA.